The primary structure comprises 574 residues: Dihydroxy-acid dehydratase 2 (574 aa).

Positions 1 to 20 (MNAKTNIKQRLPSRHVTEGP) are disordered. Cys56 contacts [2Fe-2S] cluster. A Mg(2+)-binding site is contributed by Asp88. Residue Cys129 participates in [2Fe-2S] cluster binding. Mg(2+)-binding residues include Asp130 and Lys131. At Lys131 the chain carries N6-carboxylysine. Cys201 is a [2Fe-2S] cluster binding site. A Mg(2+)-binding site is contributed by Glu451. The Proton acceptor role is filled by Ser477.

This sequence belongs to the IlvD/Edd family. In terms of assembly, homodimer. [2Fe-2S] cluster serves as cofactor. The cofactor is Mg(2+).

The catalysed reaction is (2R)-2,3-dihydroxy-3-methylbutanoate = 3-methyl-2-oxobutanoate + H2O. It carries out the reaction (2R,3R)-2,3-dihydroxy-3-methylpentanoate = (S)-3-methyl-2-oxopentanoate + H2O. It participates in amino-acid biosynthesis; L-isoleucine biosynthesis; L-isoleucine from 2-oxobutanoate: step 3/4. The protein operates within amino-acid biosynthesis; L-valine biosynthesis; L-valine from pyruvate: step 3/4. Functionally, functions in the biosynthesis of branched-chain amino acids. Catalyzes the dehydration of (2R,3R)-2,3-dihydroxy-3-methylpentanoate (2,3-dihydroxy-3-methylvalerate) into 2-oxo-3-methylpentanoate (2-oxo-3-methylvalerate) and of (2R)-2,3-dihydroxy-3-methylbutanoate (2,3-dihydroxyisovalerate) into 2-oxo-3-methylbutanoate (2-oxoisovalerate), the penultimate precursor to L-isoleucine and L-valine, respectively. This is Dihydroxy-acid dehydratase 2 from Bradyrhizobium diazoefficiens (strain JCM 10833 / BCRC 13528 / IAM 13628 / NBRC 14792 / USDA 110).